A 225-amino-acid chain; its full sequence is Octanoyltransferase (225 aa).

In terms of domain architecture, BPL/LPL catalytic spans 44–219 (RETPDEIWLL…NFIAQLTHRI (176 aa)). Substrate is bound by residues 83 to 90 (RGGQITYH), 150 to 152 (SLG), and 163 to 165 (GIA). Cysteine 181 acts as the Acyl-thioester intermediate in catalysis.

Belongs to the LipB family.

It localises to the cytoplasm. The catalysed reaction is octanoyl-[ACP] + L-lysyl-[protein] = N(6)-octanoyl-L-lysyl-[protein] + holo-[ACP] + H(+). The protein operates within protein modification; protein lipoylation via endogenous pathway; protein N(6)-(lipoyl)lysine from octanoyl-[acyl-carrier-protein]: step 1/2. In terms of biological role, catalyzes the transfer of endogenously produced octanoic acid from octanoyl-acyl-carrier-protein onto the lipoyl domains of lipoate-dependent enzymes. Lipoyl-ACP can also act as a substrate although octanoyl-ACP is likely to be the physiological substrate. In Nitrosomonas eutropha (strain DSM 101675 / C91 / Nm57), this protein is Octanoyltransferase.